The following is an 89-amino-acid chain: Large ribosomal subunit protein eL34 (89 aa).

The disordered stretch occupies residues 1–29; sequence MSAPRFRNGTFKRTLKRVPGGRKVEHYKK. Residues 13-29 are compositionally biased toward basic residues; it reads RTLKRVPGGRKVEHYKK.

The protein belongs to the eukaryotic ribosomal protein eL34 family.

In Methanosphaera stadtmanae (strain ATCC 43021 / DSM 3091 / JCM 11832 / MCB-3), this protein is Large ribosomal subunit protein eL34.